A 415-amino-acid polypeptide reads, in one-letter code: Gamma-glutamyl phosphate reductase (415 aa).

It belongs to the gamma-glutamyl phosphate reductase family.

It is found in the cytoplasm. It carries out the reaction L-glutamate 5-semialdehyde + phosphate + NADP(+) = L-glutamyl 5-phosphate + NADPH + H(+). The protein operates within amino-acid biosynthesis; L-proline biosynthesis; L-glutamate 5-semialdehyde from L-glutamate: step 2/2. Catalyzes the NADPH-dependent reduction of L-glutamate 5-phosphate into L-glutamate 5-semialdehyde and phosphate. The product spontaneously undergoes cyclization to form 1-pyrroline-5-carboxylate. The protein is Gamma-glutamyl phosphate reductase of Mycobacterium sp. (strain JLS).